An 81-amino-acid chain; its full sequence is ATP synthase subunit c (81 aa).

The next 2 helical transmembrane spans lie at 5-25 (IAAG…IGAG) and 57-77 (VGLV…FVFA).

This sequence belongs to the ATPase C chain family. F-type ATPases have 2 components, F(1) - the catalytic core - and F(0) - the membrane proton channel. F(1) has five subunits: alpha(3), beta(3), gamma(1), delta(1), epsilon(1). F(0) has three main subunits: a(1), b(2) and c(10-14). The alpha and beta chains form an alternating ring which encloses part of the gamma chain. F(1) is attached to F(0) by a central stalk formed by the gamma and epsilon chains, while a peripheral stalk is formed by the delta and b chains.

The protein resides in the cell membrane. Functionally, f(1)F(0) ATP synthase produces ATP from ADP in the presence of a proton or sodium gradient. F-type ATPases consist of two structural domains, F(1) containing the extramembraneous catalytic core and F(0) containing the membrane proton channel, linked together by a central stalk and a peripheral stalk. During catalysis, ATP synthesis in the catalytic domain of F(1) is coupled via a rotary mechanism of the central stalk subunits to proton translocation. In terms of biological role, key component of the F(0) channel; it plays a direct role in translocation across the membrane. A homomeric c-ring of between 10-14 subunits forms the central stalk rotor element with the F(1) delta and epsilon subunits. The sequence is that of ATP synthase subunit c from Mycobacterium sp. (strain JLS).